A 503-amino-acid polypeptide reads, in one-letter code: Lysine--tRNA ligase (503 aa).

Residues glutamate 414 and glutamate 421 each coordinate Mg(2+).

The protein belongs to the class-II aminoacyl-tRNA synthetase family. Homodimer. The cofactor is Mg(2+).

It localises to the cytoplasm. It catalyses the reaction tRNA(Lys) + L-lysine + ATP = L-lysyl-tRNA(Lys) + AMP + diphosphate. This Neisseria gonorrhoeae (strain NCCP11945) protein is Lysine--tRNA ligase.